The following is a 429-amino-acid chain: Glutamyl-tRNA reductase (429 aa).

Substrate contacts are provided by residues 49 to 52 (TCNR), serine 108, 113 to 115 (EAQ), and glutamine 119. Residue cysteine 50 is the Nucleophile of the active site. Position 188-193 (188-193 (GAGEMS)) interacts with NADP(+).

The protein belongs to the glutamyl-tRNA reductase family. Homodimer.

The catalysed reaction is (S)-4-amino-5-oxopentanoate + tRNA(Glu) + NADP(+) = L-glutamyl-tRNA(Glu) + NADPH + H(+). Its pathway is porphyrin-containing compound metabolism; protoporphyrin-IX biosynthesis; 5-aminolevulinate from L-glutamyl-tRNA(Glu): step 1/2. Functionally, catalyzes the NADPH-dependent reduction of glutamyl-tRNA(Glu) to glutamate 1-semialdehyde (GSA). In Rubrobacter xylanophilus (strain DSM 9941 / JCM 11954 / NBRC 16129 / PRD-1), this protein is Glutamyl-tRNA reductase.